Reading from the N-terminus, the 504-residue chain is Probable periplasmic serine endoprotease DegP-like (504 aa).

An N-terminal signal peptide occupies residues 1-26; that stretch reads MLKTTTVAGLAAVLLTTGLPAEVAQS. Residues 102-118 are compositionally biased toward basic and acidic residues; the sequence is RADRWRDRRGPRGEGRL. The tract at residues 102-122 is disordered; that stretch reads RADRWRDRRGPRGEGRLRPRA. The interval 113-286 is serine protease; the sequence is RGEGRLRPRA…PASVAKDVVD (174 aa). Residues H140, D170, and S244 each act as charge relay system in the active site. Substrate is bound by residues 242-244 and 299-303; these read GNS and LGVQI. 2 PDZ domains span residues 287-378 and 401-491; these read SLIK…LWRS and ATGE…IEAQ. 2 disordered regions span residues 389-411 and 428-447; these read GTLP…DEGQ and EDGK…AGDR.

It belongs to the peptidase S1C family.

It is found in the periplasm. It catalyses the reaction Acts on substrates that are at least partially unfolded. The cleavage site P1 residue is normally between a pair of hydrophobic residues, such as Val-|-Val.. In terms of biological role, might be efficient in the degradation of transiently denatured and unfolded proteins which accumulate in the periplasm following stress conditions. The sequence is that of Probable periplasmic serine endoprotease DegP-like (degP1) from Rhizobium meliloti (strain 1021) (Ensifer meliloti).